The primary structure comprises 71 residues: Alpha-cobratoxin (71 aa).

5 cysteine pairs are disulfide-bonded: Cys-3/Cys-20, Cys-14/Cys-41, Cys-26/Cys-30, Cys-45/Cys-56, and Cys-57/Cys-62.

Belongs to the three-finger toxin family. Long-chain subfamily. Type II alpha-neurotoxin sub-subfamily. As to quaternary structure, monomer, homo- or heterodimer with cytotoxins 1 (P60305), 2 (AC P01445), and 3 (AC P01446); disulfide-linked. In terms of processing, in homodimer alpha-cobratoxin, selective reduction of Cys(26)-Cys(30) in one subunit does not affect the activity against the alpha-7/CHRNA7 nAChR, whereas its reduction in both subunits almost prevents alpha-7/CHRNA7 nAChR recognition. On the contrary, reduction of one or both Cys(26)-Cys(30) disulfide bonds in the homodimer considerably potentiates inhibition of the alpha-3-beta-2/CHRNA3-CHRNB2 nAChR by the toxin. Expressed by the venom gland.

The protein resides in the secreted. Monomer: binds with high affinity to muscular (alpha-1-beta-1-gamma-delta/CHRNA1-CHRNB1-CHRNG-CHRND) nAChR (tested on Torpedo californica, Kd=0.2-4.5 nM) and neuronal alpha-7/CHRNA7 nicotinic acetylcholine receptors (Kd=13-105 nM). Also inhibits GABA(A) channels. Heteropentamer targets studied are composed of alpha-1-beta-3-gamma-2 (GABRA1-GABRB3-GABRG2) subunits (IC(50)=236 nM), alpha-1-beta-2-gamma-2 (GABRA1-GABRB2-GABRG2) subunits (IC(50)=469 nM), alpha-2-beta-2-gamma-2 (GABRA2-GABRB2-GABRG2) subunits (IC(50)=485 nM), alpha-5-beta-3-gamma-2 (GABRA5-GABRB3-GABRG2) subunits (IC(50)=635 nM), and alpha-2-beta-3-gamma-2 (GABRA2-GABRB3-GABRG2) subunits (IC(50)=1099 nM) (activated by 10 uM GABA). Its function is as follows. Homodimer: binds with high affinity (but lower than the monomeric form) to muscular (IC(50)=9.7 nM) and with low affinity to neuronal alpha-7/CHRNA7 nAChRs (IC(50)=1370 nM). However, it acquires (compared to the monomeric form) the capacity to block alpha-3/beta-2 (CHRNA3/CHRNB2) nAChRs. Functionally, heterodimer with cytotoxin 3 (AC P01446): is slightly more active than the homodimer in inhibiting alpha-7/CHRNA7 nAChR and is considerably more active in blocking the alpha-3-beta-2/CHRNA3-CHRNB2 nAChR. The protein is Alpha-cobratoxin of Naja kaouthia (Monocled cobra).